A 195-amino-acid polypeptide reads, in one-letter code: Imidazoleglycerol-phosphate dehydratase (195 aa).

It belongs to the imidazoleglycerol-phosphate dehydratase family.

It is found in the cytoplasm. The catalysed reaction is D-erythro-1-(imidazol-4-yl)glycerol 3-phosphate = 3-(imidazol-4-yl)-2-oxopropyl phosphate + H2O. It functions in the pathway amino-acid biosynthesis; L-histidine biosynthesis; L-histidine from 5-phospho-alpha-D-ribose 1-diphosphate: step 6/9. The chain is Imidazoleglycerol-phosphate dehydratase from Burkholderia cenocepacia (strain ATCC BAA-245 / DSM 16553 / LMG 16656 / NCTC 13227 / J2315 / CF5610) (Burkholderia cepacia (strain J2315)).